Here is a 480-residue protein sequence, read N- to C-terminus: UDP-N-acetylmuramate--L-alanine ligase (480 aa).

ATP is bound at residue 126-132 (GTHGKTT).

The protein belongs to the MurCDEF family.

The protein localises to the cytoplasm. The enzyme catalyses UDP-N-acetyl-alpha-D-muramate + L-alanine + ATP = UDP-N-acetyl-alpha-D-muramoyl-L-alanine + ADP + phosphate + H(+). Its pathway is cell wall biogenesis; peptidoglycan biosynthesis. Functionally, cell wall formation. The chain is UDP-N-acetylmuramate--L-alanine ligase from Blochmanniella pennsylvanica (strain BPEN).